Here is a 361-residue protein sequence, read N- to C-terminus: tRNA-specific 2-thiouridylase MnmA (361 aa).

Residues 6–13 (AMSGGVDS) and leucine 32 contribute to the ATP site. Cysteine 101 functions as the Nucleophile in the catalytic mechanism. An intrachain disulfide couples cysteine 101 to cysteine 194. Glycine 125 is a binding site for ATP. The segment at 144–146 (KDQ) is interaction with tRNA. Cysteine 194 serves as the catalytic Cysteine persulfide intermediate.

This sequence belongs to the MnmA/TRMU family.

It is found in the cytoplasm. The enzyme catalyses S-sulfanyl-L-cysteinyl-[protein] + uridine(34) in tRNA + AH2 + ATP = 2-thiouridine(34) in tRNA + L-cysteinyl-[protein] + A + AMP + diphosphate + H(+). Catalyzes the 2-thiolation of uridine at the wobble position (U34) of tRNA, leading to the formation of s(2)U34. The protein is tRNA-specific 2-thiouridylase MnmA of Corynebacterium aurimucosum (strain ATCC 700975 / DSM 44827 / CIP 107346 / CN-1) (Corynebacterium nigricans).